A 269-amino-acid polypeptide reads, in one-letter code: Dermonecrotic toxin SpeSicTox-betaIB3 (269 aa).

Histidine 5 is an active-site residue. Residues glutamate 25 and aspartate 27 each coordinate Mg(2+). Histidine 41 acts as the Nucleophile in catalysis. 2 disulfide bridges follow: cysteine 45–cysteine 51 and cysteine 47–cysteine 191. Mg(2+) is bound at residue aspartate 85.

The protein belongs to the arthropod phospholipase D family. Class II subfamily. The cofactor is Mg(2+). As to expression, expressed by the venom gland.

Its subcellular location is the secreted. The catalysed reaction is an N-(acyl)-sphingosylphosphocholine = an N-(acyl)-sphingosyl-1,3-cyclic phosphate + choline. It carries out the reaction an N-(acyl)-sphingosylphosphoethanolamine = an N-(acyl)-sphingosyl-1,3-cyclic phosphate + ethanolamine. The enzyme catalyses a 1-acyl-sn-glycero-3-phosphocholine = a 1-acyl-sn-glycero-2,3-cyclic phosphate + choline. It catalyses the reaction a 1-acyl-sn-glycero-3-phosphoethanolamine = a 1-acyl-sn-glycero-2,3-cyclic phosphate + ethanolamine. Dermonecrotic toxins cleave the phosphodiester linkage between the phosphate and headgroup of certain phospholipids (sphingolipid and lysolipid substrates), forming an alcohol (often choline) and a cyclic phosphate. This toxin acts on sphingomyelin (SM). It may also act on ceramide phosphoethanolamine (CPE), lysophosphatidylcholine (LPC) and lysophosphatidylethanolamine (LPE), but not on lysophosphatidylserine (LPS), and lysophosphatidylglycerol (LPG). It acts by transphosphatidylation, releasing exclusively cyclic phosphate products as second products. Induces dermonecrosis, hemolysis, increased vascular permeability, edema, inflammatory response, and platelet aggregation. The polypeptide is Dermonecrotic toxin SpeSicTox-betaIB3 (Sicarius peruensis (Six-eyed sand spider)).